We begin with the raw amino-acid sequence, 303 residues long: N-acetyl-D-glucosamine kinase (303 aa).

ATP is bound by residues 4–11 (GFDMGGTK) and 133–140 (GVGGGLIV). Residues His-157, Cys-177, Cys-179, and Cys-184 each coordinate Zn(2+).

This sequence belongs to the ROK (NagC/XylR) family. NagK subfamily.

It catalyses the reaction N-acetyl-D-glucosamine + ATP = N-acetyl-D-glucosamine 6-phosphate + ADP + H(+). The protein operates within cell wall biogenesis; peptidoglycan recycling. In terms of biological role, catalyzes the phosphorylation of N-acetyl-D-glucosamine (GlcNAc) derived from cell-wall degradation, yielding GlcNAc-6-P. The chain is N-acetyl-D-glucosamine kinase from Yersinia enterocolitica serotype O:8 / biotype 1B (strain NCTC 13174 / 8081).